We begin with the raw amino-acid sequence, 432 residues long: Glutamate-1-semialdehyde 2,1-aminomutase (432 aa).

Residue lysine 269 is modified to N6-(pyridoxal phosphate)lysine.

The protein belongs to the class-III pyridoxal-phosphate-dependent aminotransferase family. HemL subfamily. In terms of assembly, homodimer. Pyridoxal 5'-phosphate serves as cofactor.

The protein resides in the cytoplasm. The catalysed reaction is (S)-4-amino-5-oxopentanoate = 5-aminolevulinate. It functions in the pathway porphyrin-containing compound metabolism; protoporphyrin-IX biosynthesis; 5-aminolevulinate from L-glutamyl-tRNA(Glu): step 2/2. This chain is Glutamate-1-semialdehyde 2,1-aminomutase, found in Desulforamulus reducens (strain ATCC BAA-1160 / DSM 100696 / MI-1) (Desulfotomaculum reducens).